We begin with the raw amino-acid sequence, 116 residues long: Large ribosomal subunit protein uL22 (116 aa).

Belongs to the universal ribosomal protein uL22 family. Part of the 50S ribosomal subunit.

This protein binds specifically to 23S rRNA; its binding is stimulated by other ribosomal proteins, e.g. L4, L17, and L20. It is important during the early stages of 50S assembly. It makes multiple contacts with different domains of the 23S rRNA in the assembled 50S subunit and ribosome. In terms of biological role, the globular domain of the protein is located near the polypeptide exit tunnel on the outside of the subunit, while an extended beta-hairpin is found that lines the wall of the exit tunnel in the center of the 70S ribosome. This Orientia tsutsugamushi (strain Boryong) (Rickettsia tsutsugamushi) protein is Large ribosomal subunit protein uL22.